The primary structure comprises 65 residues: Large ribosomal subunit protein bL35 (65 aa).

It belongs to the bacterial ribosomal protein bL35 family.

The protein is Large ribosomal subunit protein bL35 of Aliarcobacter butzleri (strain RM4018) (Arcobacter butzleri).